Reading from the N-terminus, the 347-residue chain is Malate dehydrogenase, mitochondrial (347 aa).

The N-terminal 27 residues, 1–27 (MKASILRSVRSAVSRSSSSNRLLSRSF), are a transit peptide targeting the mitochondrion. NAD(+) contacts are provided by residues 41-47 (GAAGGIG) and Asp-67. Arg-114 and Arg-120 together coordinate substrate. NAD(+)-binding positions include Asn-127 and 150–152 (ISN). Substrate contacts are provided by Asn-152 and Arg-186. His-210 serves as the catalytic Proton acceptor. An NAD(+)-binding site is contributed by Met-261.

The protein belongs to the LDH/MDH superfamily. MDH type 1 family. Homodimer.

The protein localises to the mitochondrion matrix. It carries out the reaction (S)-malate + NAD(+) = oxaloacetate + NADH + H(+). This Citrullus lanatus (Watermelon) protein is Malate dehydrogenase, mitochondrial (MMDH).